Here is a 224-residue protein sequence, read N- to C-terminus: Ribose-5-phosphate isomerase A 2 (224 aa).

Substrate contacts are provided by residues 27-30, 83-86, and 96-99; these read SGST, DGTD, and KGGG. Residue glutamate 105 is the Proton acceptor of the active site. Residue lysine 123 coordinates substrate.

Belongs to the ribose 5-phosphate isomerase family. As to quaternary structure, homodimer.

It catalyses the reaction aldehydo-D-ribose 5-phosphate = D-ribulose 5-phosphate. The protein operates within carbohydrate degradation; pentose phosphate pathway; D-ribose 5-phosphate from D-ribulose 5-phosphate (non-oxidative stage): step 1/1. Its function is as follows. Catalyzes the reversible conversion of ribose-5-phosphate to ribulose 5-phosphate. The sequence is that of Ribose-5-phosphate isomerase A 2 from Oceanobacillus iheyensis (strain DSM 14371 / CIP 107618 / JCM 11309 / KCTC 3954 / HTE831).